Here is a 385-residue protein sequence, read N- to C-terminus: Alkanesulfonate monooxygenase (385 aa).

The protein belongs to the SsuD family.

It catalyses the reaction an alkanesulfonate + FMNH2 + O2 = an aldehyde + FMN + sulfite + H2O + 2 H(+). Its function is as follows. Catalyzes the desulfonation of aliphatic sulfonates. This Paraburkholderia phymatum (strain DSM 17167 / CIP 108236 / LMG 21445 / STM815) (Burkholderia phymatum) protein is Alkanesulfonate monooxygenase.